The chain runs to 161 residues: Phosphopantetheine adenylyltransferase (161 aa).

A substrate-binding site is contributed by serine 8. Residues 8–9 (SF) and histidine 16 contribute to the ATP site. 3 residues coordinate substrate: lysine 40, threonine 72, and arginine 86. ATP contacts are provided by residues 87–89 (GLR), glutamate 97, and 122–128 (HSFLSSS).

It belongs to the bacterial CoaD family. As to quaternary structure, homohexamer. The cofactor is Mg(2+).

The protein resides in the cytoplasm. It catalyses the reaction (R)-4'-phosphopantetheine + ATP + H(+) = 3'-dephospho-CoA + diphosphate. Its pathway is cofactor biosynthesis; coenzyme A biosynthesis; CoA from (R)-pantothenate: step 4/5. Reversibly transfers an adenylyl group from ATP to 4'-phosphopantetheine, yielding dephospho-CoA (dPCoA) and pyrophosphate. The protein is Phosphopantetheine adenylyltransferase of Prochlorococcus marinus (strain SARG / CCMP1375 / SS120).